Reading from the N-terminus, the 2248-residue chain is MMDSENKPENDEDEKINKEAQDLTKLSSHNEDGGPVSDVIASFPENSMGKRGFSESSNSDSVVIGEDRNKHASKRRKLDEAEPLKSGKQGICRLETSESSVTEGGIALDETGKETFLSDCTVGGTCLPNALSPSCNFSTIDVVSLKTDTEKTSAQEMVSLDLERESPFPPKEISVSCTIGNVDTVLKCSICGHLFSSCSDLEKHAESHMQQPKEHTCCHCSHKAESSSALHMHIKQAHGPQKVFSCDLCGFQCSEENLLNAHYLGKTHLRRQNLAARGGFVQILTKQPFPKKSRTMATKNVHSKPRTSKSIAKNSDSKGLRNVGSTFKDFRGSISKQSGSSSELLVEMMPSRNTLSQEVEIVEEHVTSLGLAQNPENQSRKLDTLVTSEGLLEKLESTKNTLQAAHGNSVTSRPRPERNILVLGNSFRRRSSTFTLKGQAKKRFNLLGIKRGTSETQRMYMKHLRTQMKTHDAESVLKHLEACSSVQRVCVTTSETQEAEQGQGSARPPDSGLHSLTVKPASGSQTLCACTDCGQVATNRTDLEIHVKRCHAREMKFYCRTCDFSSMSRRDLDEHLHSNQHQQTASVLSCQCCSFISLDEINLRDHMKEKHNMHFLCTPCNLFFLSEKDVEEHKATEKHINSLVQPKTLQSSNSDLVLQTLPLSTLESENAKESMDDSGKASQEEPLKSRVSHGNEVRHSSKPQFQCKKCFYKTRSSTVLTRHIKLRHGQDYHFLCKACNLYSLSKEGMEKHIKRSKHLENAKKNNIGLSFEECIERVCIGANDKKEEFDVSGNGRIEGHIGVQLQEHSYLEKGMLASEELSQSGGSTKDDELASTTTPKRGRPKGNISRTCSHCGLLASSITNLTVHIRRKHSHQYSYLCKVCKYYTVTKGDMERHCATKKHKGRVEIEASGKHSSDIIVGPEGGSLEAGKKNAGSAVTMSDEHANKPAESPTSVLEKPDRGNSIEAEVENVFHSLDGEVNSHLLDKKEQISSEPEDFAQPGDVYSQRDVTGTGENKCLHCEFSAHSSASLELHVKRKHTKEFEFYCMACDYYAVTRREMTRHAATEKHKMKRQSYLNSANVEAGSADMSKNIIMPEEEHQQNSEEFQIISGQPSDTLKSRNAADCSILNENTNLDMSKVLCAADSVEVETEEESNFNEDHSFCETFQQAPVKDKVRKPEEMMSLTMSSNYGSPSRFQNENSGSSALNCETAKKNHEISNDAGELRVHCEGEGGNAGDGGGVVPHRHLCPVTLDGERSAESPVLVVTRITREQGNLESGGQNRVARGHGLEDLKGVQEDPVLGNKEILMNSQHETEFILEEDGPASDSTVESSDVYETIISIDDKGQAMYSFGRFDSSIIRIKNPEDGELIDQSEEGLIATGVRISELPLKDCAQGVKKKKSEGSSIGESTRIRCDDCGFLADGLSGLNVHIAMKHPTKEKHFHCLLCGKSFYTESNLHQHLASAGHMRNEQASVEELPEGGATFKCVKCTEPFDSEQNLFLHIKGQHEELLREVNKYIVEDTEQINREREENQGNVCKYCGKMCRSSNSMAFLAHIRTHTGSKPFKCKICHFATAQLGDARNHVKRHLGMREYKCHVCGVAFVMKKHLNTHLLGKHGVGTPKERKFTCHLCDRSFTEKWALNNHMKLHTGEKPFKCTWPTCHYSFLTASAMKDHYRTHTGEKSFLCDLCGFAGGTRHALTKHRRQHTGEKPFKCDECNFASTTQSHLTRHKRVHTGEKPYRCPWCDYRSNCAENIRKHILHTGKHEGVKMYNCPKCDYGTNVPVEFRNHLKEQHPDIENPDLAYLHAGIVSKSYECRLKGQGATFVETDSPFTAAALAEEPLVKEKPLRSSRRPAPPPEQVQQVIIFQGYDGEFALDPSVEETAAATLQTLAMAGQVARVVHITEDGQVIATSQSGAHVGSVVPGPILPEQLADGATQVVVVGGSMEGHGMDESLSPGGAVIQQVTKQEILNLSEAGVAPPEASSALDALLCAVTELGEVEGRAGLEEQGRPGAKDVLIQLPGQEVSHVAADPEAPEIQMFPQAQESPAAVEVLTQVVHPSAAMASQERAQVAFKKMVQGVLQFAVCDTAAAGQLVKDGVTQVVVSEEGAVHMVAGEGAQIIMQEAQGEHMDLVESDGEISQIIVTEELVQAMVQESSGGFSEGTTHYILTELPPGVQDEPGLYSHTVLETADSQELLQAGATLGTEAGAPSRAEQLASVVIYTQEGSSAAAAIQSQRESSELQEA.

Positions 1-32 (MMDSENKPENDEDEKINKEAQDLTKLSSHNED) are enriched in basic and acidic residues. The segment at 1 to 84 (MMDSENKPEN…RRKLDEAEPL (84 aa)) is disordered. 3 C2H2-type zinc fingers span residues 186–208 (LKCS…AESH), 215–238 (HTCC…KQAH), and 244–268 (FSCD…GKTH). 2 disordered regions span residues 291 to 322 (KKSR…GLRN) and 494 to 515 (SETQ…GLHS). Positions 494–504 (SETQEAEQGQG) are enriched in polar residues. 3 C2H2-type zinc fingers span residues 528–551 (CACT…KRCH), 557–581 (FYCR…SNQH), and 615–639 (FLCT…TEKH). The interval 667 to 700 (ESENAKESMDDSGKASQEEPLKSRVSHGNEVRHS) is disordered. Residues 669 to 699 (ENAKESMDDSGKASQEEPLKSRVSHGNEVRH) are compositionally biased toward basic and acidic residues. A C2H2-type 7 zinc finger spans residues 705–728 (FQCKKCFYKTRSSTVLTRHIKLRH). A disordered region spans residues 821–847 (LSQSGGSTKDDELASTTTPKRGRPKGN). 2 consecutive C2H2-type zinc fingers follow at residues 850–873 (RTCS…RRKH) and 879–903 (YLCK…TKKH). The disordered stretch occupies residues 910 to 962 (EASGKHSSDIIVGPEGGSLEAGKKNAGSAVTMSDEHANKPAESPTSVLEKPDR). C2H2-type zinc fingers lie at residues 1017–1040 (NKCL…KRKH) and 1046–1070 (FYCM…TEKH). Serine 1262 carries the phosphoserine modification. C2H2-type zinc fingers lie at residues 1444-1468 (FHCL…SAGH) and 1486-1509 (FKCV…KGQH). The segment at 1537–1561 (NVCKYCGKMCRSSNSMAFLAHIRTH) adopts a C2H2-type 14; degenerate zinc-finger fold. 8 consecutive C2H2-type zinc fingers follow at residues 1567 to 1589 (FKCK…VKRH), 1595 to 1618 (YKCH…LGKH), 1628 to 1650 (FTCH…MKLH), 1656 to 1680 (FKCT…YRTH), 1686 to 1708 (FLCD…RRQH), 1714 to 1736 (FKCD…KRVH), 1742 to 1767 (YRCP…TGKH), and 1773 to 1796 (YNCP…KEQH).

It is found in the nucleus. May be involved in transcriptional regulation. In Homo sapiens (Human), this protein is Zinc finger protein 407 (ZNF407).